A 486-amino-acid chain; its full sequence is Heme A synthase COX15 (486 aa).

The transit peptide at 1–33 (MLFRNIEVGRQAAKLLTRTSSRLAWQSIGASRN) directs the protein to the mitochondrion. Over 34-85 (ISTIRQQIRKTQLYNFKKTVSIRPFSLSSPVFKPHVASESNPIESRLKTSKN) the chain is Mitochondrial matrix. A helical membrane pass occupies residues 86–106 (VAYWLIGTSGLVFGIVVLGGL). The Mitochondrial intermembrane segment spans residues 107–170 (TRLTESGLSI…FIFFMEWIHR (64 aa)). H169 lines the heme o pocket. A helical membrane pass occupies residues 171 to 191 (LWGRAIGAVFILPAVYFAVSK). The Mitochondrial matrix segment spans residues 192 to 200 (KTSGHVNKR). A helical membrane pass occupies residues 201 to 221 (LFGLAGLLGLQGFVGWWMVKS). Over 222 to 243 (GLDQEQLDARKSKPTVSQYRLT) the chain is Mitochondrial intermembrane. A helical membrane pass occupies residues 244–264 (THLGTAFFLYMGMLWTGLEIL). H245 provides a ligand contact to heme o. Residues 265–293 (RECKWIKNPVQAISLFKKLDNPAIGPMRK) lie on the Mitochondrial matrix side of the membrane. The chain crosses the membrane as a helical span at residues 294–314 (ISLALLAVSFLTAMSGGMVAG). Topologically, residues 315–364 (LDAGWVYNTWPKMGERWFPSSRELMDENFCRREDKKDLWWRNLLENPVTV) are mitochondrial intermembrane. The chain crosses the membrane as a helical span at residues 365–387 (QLVHRTCAYVAFTSVLAAHMYAI). H368 lines the heme b pocket. The Mitochondrial matrix portion of the chain corresponds to 388–402 (KKKAVIPRNAMTSLH). A helical membrane pass occupies residues 403-423 (VMMGVVTLQATLGILTILYLV). A topological domain (mitochondrial intermembrane) is located at residue P424. Residues 425-445 (ISLASIHQAGALALLTSSLVF) form a helical membrane-spanning segment. H431 contacts heme b. Over 446 to 486 (ASQLRKPRAPMRNVIITLPHSSKVTSGKILSEASKLASKPL) the chain is Mitochondrial matrix.

Belongs to the COX15/CtaA family. Type 2 subfamily. Forms 200-350 kDa oligomeric complexes independent on heme binding. In addition to form homooligomeric complexes, a portion also associates with the mitochondrial respiratory supercomplexes. Interacts with CcO assembly factors PET117, SHY1, COA3 and COA1, CcO subunit COX13 and cytochrome b-c1 subunit COR1. It depends on heme b as a cofactor.

It localises to the mitochondrion inner membrane. The enzyme catalyses Fe(II)-heme o + 2 A + H2O = Fe(II)-heme a + 2 AH2. It participates in porphyrin-containing compound metabolism; heme A biosynthesis; heme A from heme O: step 1/1. Functionally, catalyzes the second reaction in the biosynthesis of heme A, a prosthetic group of mitochondrial cytochrome c oxidase (CcO). Heme A is synthesized from heme B by two sequential enzymatic reactions catalyzed by heme O synthase (HOS/COX10) and heme A synthase (HAS/COX15). HAS catalyzes the conversion of heme O to heme A by two successive hydroxylations of the methyl group at C8, in a reaction that involves matrix ferredoxin YAH1 and ferredoxin reductase ARH1. The first hydroxylation forms heme I, the second hydroxylation results in an unstable dihydroxymethyl group, which spontaneously dehydrates, resulting in the formyl group of heme A. May also play a secondary role in CcO assembly. Plays a role in the maturation of COX1, the heme A-containing structural CcO subunit, possibly by interacting with the COX1-containing sub-assembly complexes that form prior to heme A insertion. May also positively regulate the upstream enzymatic reaction, farnesylation of heme B by HOS/COX10. The sequence is that of Heme A synthase COX15 from Saccharomyces cerevisiae (strain ATCC 204508 / S288c) (Baker's yeast).